The following is a 144-amino-acid chain: MKSYIAKAQEVERKWYVVDAAGKPLGRVASQVASILRGKNKPTFTPNVDCGDFVIVINAEKVVLTGKKLDQKMLRKHSLYAGGLKETPYREVLEKKPEFAFEEAVRRMLPTGVLGRKMLKKLNVYRGAEHNHAAQKPEVLELRY.

It belongs to the universal ribosomal protein uL13 family. Part of the 50S ribosomal subunit.

This protein is one of the early assembly proteins of the 50S ribosomal subunit, although it is not seen to bind rRNA by itself. It is important during the early stages of 50S assembly. The polypeptide is Large ribosomal subunit protein uL13 (Clostridium perfringens (strain 13 / Type A)).